Consider the following 183-residue polypeptide: Large ribosomal subunit protein uL22 (183 aa).

A disordered region spans residues 163–183 (KTAAKKQSAKKLKKQKMMYRE). Basic residues predominate over residues 165 to 183 (AAKKQSAKKLKKQKMMYRE).

It belongs to the universal ribosomal protein uL22 family.

In Pectinaria gouldii (Trumpet worm), this protein is Large ribosomal subunit protein uL22 (rpl-17).